Here is a 394-residue protein sequence, read N- to C-terminus: Acetate kinase (394 aa).

Asparagine 7 lines the Mg(2+) pocket. Lysine 14 is an ATP binding site. Residue arginine 88 coordinates substrate. Aspartate 145 (proton donor/acceptor) is an active-site residue. Residues 205–209 (HLGNG), 279–281 (DFR), and 327–331 (GIGEN) each bind ATP. Glutamate 379 is a binding site for Mg(2+).

It belongs to the acetokinase family. Homodimer. Mg(2+) is required as a cofactor. Requires Mn(2+) as cofactor.

It localises to the cytoplasm. It catalyses the reaction acetate + ATP = acetyl phosphate + ADP. The protein operates within metabolic intermediate biosynthesis; acetyl-CoA biosynthesis; acetyl-CoA from acetate: step 1/2. Functionally, catalyzes the formation of acetyl phosphate from acetate and ATP. Can also catalyze the reverse reaction. The sequence is that of Acetate kinase from Campylobacter lari (strain RM2100 / D67 / ATCC BAA-1060).